An 88-amino-acid chain; its full sequence is Small ribosomal subunit protein uS15c (88 aa).

Belongs to the universal ribosomal protein uS15 family. In terms of assembly, part of the 30S ribosomal subunit.

The protein resides in the plastid. Its subcellular location is the chloroplast. This chain is Small ribosomal subunit protein uS15c (rps15), found in Crucihimalaya wallichii (Rock-cress).